The sequence spans 505 residues: Glycerol kinase (505 aa).

Thr15 contacts ADP. Residues Thr15, Thr16, and Ser17 each contribute to the ATP site. Thr15 is a sn-glycerol 3-phosphate binding site. Arg19 serves as a coordination point for ADP. Arg85, Glu86, Tyr136, and Asp249 together coordinate sn-glycerol 3-phosphate. Glycerol is bound by residues Arg85, Glu86, Tyr136, Asp249, and Gln250. ADP-binding residues include Thr271 and Gly314. ATP is bound by residues Thr271, Gly314, Gln318, and Gly415. ADP contacts are provided by Gly415 and Asn419.

The protein belongs to the FGGY kinase family.

It carries out the reaction glycerol + ATP = sn-glycerol 3-phosphate + ADP + H(+). It functions in the pathway polyol metabolism; glycerol degradation via glycerol kinase pathway; sn-glycerol 3-phosphate from glycerol: step 1/1. With respect to regulation, inhibited by fructose 1,6-bisphosphate (FBP). Its function is as follows. Key enzyme in the regulation of glycerol uptake and metabolism. Catalyzes the phosphorylation of glycerol to yield sn-glycerol 3-phosphate. This is Glycerol kinase from Mycoplasma capricolum subsp. capricolum (strain California kid / ATCC 27343 / NCTC 10154).